A 209-amino-acid chain; its full sequence is Mitochondrial import inner membrane translocase subunit Tim23 (209 aa).

3 helical membrane-spanning segments follow: residues 73 to 93, 125 to 145, and 180 to 200; these read FELAFFTIGGCCISGAAFGAL, ALWANTLGSLALLYSAFGVIV, and GGLAGLALASTFALYNNWEHI.

This sequence belongs to the Tim17/Tim22/Tim23 family. Component of the TIM23 complex at least composed of timm23, timm17 and timm50. The complex interacts with the timm44 component of the PAM complex.

It localises to the mitochondrion inner membrane. In terms of biological role, essential component of the TIM23 complex, a complex that mediates the translocation of transit peptide-containing proteins across the mitochondrial inner membrane. In Xenopus laevis (African clawed frog), this protein is Mitochondrial import inner membrane translocase subunit Tim23 (timm23).